A 171-amino-acid chain; its full sequence is Zinc finger A20 and AN1 domain-containing stress-associated protein 8 (171 aa).

The segment at Pro-11–Glu-45 adopts an A20-type zinc-finger fold. 12 residues coordinate Zn(2+): Cys-17, Cys-21, Cys-33, Cys-36, Cys-112, Cys-115, Cys-126, Cys-128, Cys-133, His-136, His-142, and Cys-144. An AN1-type zinc finger spans residues Arg-106–Ala-152.

Functionally, may be involved in environmental stress response. The protein is Zinc finger A20 and AN1 domain-containing stress-associated protein 8 (SAP8) of Oryza sativa subsp. indica (Rice).